The sequence spans 371 residues: Chaperone protein DnaJ (371 aa).

A J domain is found at 6–71 (DYYEILGVEK…QKRAQYDRFG (66 aa)). The interval 104–123 (GGMGGQQRQRRNRNEPRRGS) is disordered. A CR-type zinc finger spans residues 139–217 (GIEKEIEFDT…CKGKGRVAEH (79 aa)). Positions 152, 155, 169, 172, 191, 194, 205, and 208 each coordinate Zn(2+). CXXCXGXG motif repeat units lie at residues 152–159 (CDECKGTG), 169–176 (CGTCGGSG), 191–198 (CPTCHGQG), and 205–212 (CKPCKGKG).

Belongs to the DnaJ family. As to quaternary structure, homodimer. Requires Zn(2+) as cofactor.

It localises to the cytoplasm. Functionally, participates actively in the response to hyperosmotic and heat shock by preventing the aggregation of stress-denatured proteins and by disaggregating proteins, also in an autonomous, DnaK-independent fashion. Unfolded proteins bind initially to DnaJ; upon interaction with the DnaJ-bound protein, DnaK hydrolyzes its bound ATP, resulting in the formation of a stable complex. GrpE releases ADP from DnaK; ATP binding to DnaK triggers the release of the substrate protein, thus completing the reaction cycle. Several rounds of ATP-dependent interactions between DnaJ, DnaK and GrpE are required for fully efficient folding. Also involved, together with DnaK and GrpE, in the DNA replication of plasmids through activation of initiation proteins. The protein is Chaperone protein DnaJ of Bdellovibrio bacteriovorus (strain ATCC 15356 / DSM 50701 / NCIMB 9529 / HD100).